Consider the following 119-residue polypeptide: Putative phosphoethanolamine transferase YjgX (119 aa).

Helical transmembrane passes span 5-25 (VFPV…VIFW) and 94-114 (LLLS…TIPY).

The protein belongs to the phosphoethanolamine transferase family.

It is found in the cell inner membrane. In Escherichia coli (strain K12), this protein is Putative phosphoethanolamine transferase YjgX (yjgX).